Here is an 81-residue protein sequence, read N- to C-terminus: EC protein I/II (81 aa).

It belongs to the metallothionein superfamily. Type 15 family.

Its function is as follows. Binds 5 molecules of zinc. May have a role in Zn(2+) homeostasis during embryogenesis. This Triticum aestivum (Wheat) protein is EC protein I/II.